Reading from the N-terminus, the 246-residue chain is MKYDIIGDIHGCLQEFQNLTEKLGYNWSSGLPVHPDQRKLAFVGDITDRGPHSLRMIEIVWELVIHKKEAYYAPGNHCNKLYRFFLGRNVTVAHGLETTVAEYEALPSHKQNMIKEKFITLYEQSPLYHVLDEKRLLVCHAGIRQDYIGRQDKKVQTFVLYGDITGEKHADGSPVRRDWAKEYKGTAWIVYGHTPVKEPRFVNHTVNIDTGAVFGGRLTALRYPEMETVSVPSSLPFVPEKFRPIS.

Belongs to the PrpE family. Ni(2+) is required as a cofactor.

The catalysed reaction is P(1),P(4)-bis(5'-guanosyl) tetraphosphate + H2O = GMP + GTP + 2 H(+). Functionally, asymmetrically hydrolyzes Ap4p to yield AMP and ATP. In Bacillus thuringiensis (strain Al Hakam), this protein is Bis(5'-nucleosyl)-tetraphosphatase PrpE [asymmetrical].